We begin with the raw amino-acid sequence, 1515 residues long: Neurite extension and migration factor (1515 aa).

A compositionally biased stretch (basic and acidic residues) spans 381–405 (DKKKGKEEVHEDKSIETKDEKDNGE). Disordered regions lie at residues 381 to 415 (DKKK…KPCG), 505 to 529 (VNER…PKKR), 731 to 774 (KKIK…HMSE), 1158 to 1225 (FDEP…TKKG), 1372 to 1422 (TPQE…EDSR), and 1435 to 1479 (TLGN…AGTT). 2 stretches are compositionally biased toward polar residues: residues 746-757 (SPVSEDTSSKAN) and 763-772 (TPGTSNSSHM). Low complexity predominate over residues 1180-1193 (PGKSGAVSQSSSQK). A compositionally biased stretch (basic residues) spans 1442 to 1452 (THKKLYRHKSS). Basic and acidic residues predominate over residues 1455 to 1479 (GLRDEKYKGKRVEREQAHKDEAGTT).

Expressed in the brain, particularly during the late embryonic and perinatal stages of development. In the developing brain, it is expressed only in the cortical plate and subplate region but not in the intermediate or ventricular zone.

It localises to the nucleus. Its subcellular location is the cytoplasm. Involved in neurite outgrowth by regulating cell-cell adhesion via the N-cadherin signaling pathway. May act by regulating expression of protein-coding genes, such as N-cadherins and integrin beta-1 (ITGB1). The protein is Neurite extension and migration factor of Mus musculus (Mouse).